The sequence spans 176 residues: MRKVKPARKLGRTAAHRKATLSSLSTQLILHKRIETTEAKAKETRKVVEKIITKARKGTVHAQREIFKDIRDKEAIKTLFEEIVGKVGTRNGGYTRVIKLCPRFGDAAKMAVIELVDFAEAPAAAPKAARQDRSKRVKGSRKTEASAAKAAPAAQAAPELPAESDAPAAEAAPTEE.

The tract at residues 124–176 (AAPKAARQDRSKRVKGSRKTEASAAKAAPAAQAAPELPAESDAPAAEAAPTEE) is disordered. The span at 145-176 (ASAAKAAPAAQAAPELPAESDAPAAEAAPTEE) shows a compositional bias: low complexity.

Belongs to the bacterial ribosomal protein bL17 family. Part of the 50S ribosomal subunit. Contacts protein L32.

The sequence is that of Large ribosomal subunit protein bL17 from Chlorobium phaeovibrioides (strain DSM 265 / 1930) (Prosthecochloris vibrioformis (strain DSM 265)).